Reading from the N-terminus, the 298-residue chain is Probable aspartoacylase (298 aa).

His-13 and Glu-16 together coordinate Zn(2+). Residues Arg-54 and Asn-61–Arg-62 each bind substrate. Position 103 (His-103) interacts with Zn(2+). Residues Glu-161 and Tyr-271 each contribute to the substrate site.

The protein belongs to the AspA/AstE family. Aspartoacylase subfamily. Requires Zn(2+) as cofactor.

The catalysed reaction is an N-acyl-L-aspartate + H2O = a carboxylate + L-aspartate. The protein is Probable aspartoacylase of Prochlorococcus marinus (strain MIT 9515).